Reading from the N-terminus, the 134-residue chain is Phosphoribosyl-AMP cyclohydrolase (134 aa).

Aspartate 80 is a Mg(2+) binding site. Residue cysteine 81 participates in Zn(2+) binding. Mg(2+)-binding residues include aspartate 82 and aspartate 84. Cysteine 98 and cysteine 105 together coordinate Zn(2+).

Belongs to the PRA-CH family. As to quaternary structure, homodimer. Mg(2+) serves as cofactor. It depends on Zn(2+) as a cofactor.

The protein localises to the cytoplasm. The enzyme catalyses 1-(5-phospho-beta-D-ribosyl)-5'-AMP + H2O = 1-(5-phospho-beta-D-ribosyl)-5-[(5-phospho-beta-D-ribosylamino)methylideneamino]imidazole-4-carboxamide. It participates in amino-acid biosynthesis; L-histidine biosynthesis; L-histidine from 5-phospho-alpha-D-ribose 1-diphosphate: step 3/9. Functionally, catalyzes the hydrolysis of the adenine ring of phosphoribosyl-AMP. The polypeptide is Phosphoribosyl-AMP cyclohydrolase (Bordetella petrii (strain ATCC BAA-461 / DSM 12804 / CCUG 43448)).